A 353-amino-acid chain; its full sequence is Photosystem II protein D1 (353 aa).

An N-acetylthreonine modification is found at Thr2. Residue Thr2 is modified to Phosphothreonine. Helical transmembrane passes span 29–46 (YIGW…TATS), 118–133 (HFLL…EWEL), and 142–156 (WIAV…AATA). Residue His118 coordinates chlorophyll a. Tyr126 serves as a coordination point for pheophytin a. Residues Asp170 and Glu189 each coordinate [CaMn4O5] cluster. The chain crosses the membrane as a helical span at residues 197 to 218 (FHMLGVAGVFGGSLFSAMHGSL). His198 lines the chlorophyll a pocket. Residues His215 and 264–265 (SF) each bind a quinone. His215 is a Fe cation binding site. His272 is a binding site for Fe cation. A helical transmembrane segment spans residues 274–288 (FLAAWPVAGIWFTAL). His332, Glu333, Asp342, and Ala344 together coordinate [CaMn4O5] cluster. A propeptide spanning residues 345–353 (AVESISIGG) is cleaved from the precursor.

This sequence belongs to the reaction center PufL/M/PsbA/D family. In terms of assembly, PSII is composed of 1 copy each of membrane proteins PsbA, PsbB, PsbC, PsbD, PsbE, PsbF, PsbH, PsbI, PsbJ, PsbK, PsbL, PsbM, PsbT, PsbX, PsbY, PsbZ, Psb30/Ycf12, at least 3 peripheral proteins of the oxygen-evolving complex and a large number of cofactors. It forms dimeric complexes. The D1/D2 heterodimer binds P680, chlorophylls that are the primary electron donor of PSII, and subsequent electron acceptors. It shares a non-heme iron and each subunit binds pheophytin, quinone, additional chlorophylls, carotenoids and lipids. D1 provides most of the ligands for the Mn4-Ca-O5 cluster of the oxygen-evolving complex (OEC). There is also a Cl(-1) ion associated with D1 and D2, which is required for oxygen evolution. The PSII complex binds additional chlorophylls, carotenoids and specific lipids. serves as cofactor. Post-translationally, tyr-161 forms a radical intermediate that is referred to as redox-active TyrZ, YZ or Y-Z. In terms of processing, C-terminally processed by CTPA; processing is essential to allow assembly of the oxygen-evolving complex and thus photosynthetic growth.

It is found in the plastid. The protein resides in the chloroplast thylakoid membrane. It catalyses the reaction 2 a plastoquinone + 4 hnu + 2 H2O = 2 a plastoquinol + O2. Functionally, photosystem II (PSII) is a light-driven water:plastoquinone oxidoreductase that uses light energy to abstract electrons from H(2)O, generating O(2) and a proton gradient subsequently used for ATP formation. It consists of a core antenna complex that captures photons, and an electron transfer chain that converts photonic excitation into a charge separation. The D1/D2 (PsbA/PsbD) reaction center heterodimer binds P680, the primary electron donor of PSII as well as several subsequent electron acceptors. The sequence is that of Photosystem II protein D1 from Pinus contorta (Shore pine).